We begin with the raw amino-acid sequence, 74 residues long: Kappa-stichotoxin-Shd5a (74 aa).

The signal sequence occupies residues 1 to 22; sequence MKFQVIAAVLLIAFCLCVVVTA. A propeptide spanning residues 23–39 is cleaved from the precursor; it reads RMELQDVEDVENGFQKR. Positions 42 to 74 constitute a ShKT domain; the sequence is CIDTIPQSRCTAFQCKHSMKYRLSFCRKTCGTC. Intrachain disulfides connect Cys-42–Cys-74, Cys-51–Cys-67, and Cys-56–Cys-71.

It belongs to the sea anemone type 1 potassium channel toxin family. Type 1a subfamily.

It is found in the secreted. The protein resides in the nematocyst. Inhibits voltage-gated potassium channels (Kv) with higher potency for Kv1.1/KCNA1 and Kv1.3/KCNA3. This chain is Kappa-stichotoxin-Shd5a, found in Stichodactyla haddoni (Saddle carpet anemone).